We begin with the raw amino-acid sequence, 436 residues long: MTNNTMLISLSTQPADARWGEKATLSVNEQGFTIHVGTTSLNGKAALATIQRAARKIDGQGIKHVTLAGEGWDLANSWAFWQGYRGPKGQRTVEWAELNDADKKELNDRLKIVDWVRDTINLPAEDLGPEQLATRAVDLLCDVACDAVNYRITKGEDLREQNYAGLYTVGRGSERQPVLLALDYNPTGNPDAPVFACLVGKGITFDTGGYSLKPSGSMDSMKSDMGGAATLTGALALAASRGLQQRVKLYLCCADNMVSGNAFRLGDIIRYRNGKTVEVMNTDAEGRLVLADGLIDASEQNPQWIIDCATLTGAAKMALGNDYHALFSFDDELVAALQESAKEENEPFWRLPLEEFHRSHLPSSFADLNNIASGAHTAGASTAAAFLSHFVKNYQQGWLHIDCSATYRKGAVDQWATGATGLGVRTLANLLLSNAK.

2 residues coordinate Mn(2+): Lys-201 and Asp-206. Lys-213 is a catalytic residue. The Mn(2+) site is built by Asp-224, Asp-283, and Glu-285. Residue Arg-287 is part of the active site.

This sequence belongs to the peptidase M17 family. In terms of assembly, homohexamer. Requires Mn(2+) as cofactor.

It localises to the cytoplasm. It catalyses the reaction Release of an N-terminal amino acid, Xaa, from a peptide or arylamide. Xaa is preferably Glu or Asp but may be other amino acids, including Leu, Met, His, Cys and Gln.. Probably plays an important role in intracellular peptide degradation. The chain is Peptidase B from Pectobacterium atrosepticum (strain SCRI 1043 / ATCC BAA-672) (Erwinia carotovora subsp. atroseptica).